The chain runs to 68 residues: Conotoxin TsMMSK-021 (68 aa).

The first 20 residues, 1-20 (MMSKLGVLLTICLLLFPLTA), serve as a signal peptide directing secretion. Positions 21–52 (VRLDGDQHTDRPADRMQDIATEQHPLFDPVKR) are excised as a propeptide. 3 disulfides stabilise this stretch: Cys53–Cys66, Cys54–Cys62, and Cys58–Cys65. Position 64 is a 4-hydroxyproline (Pro64).

This sequence belongs to the conotoxin M superfamily. As to expression, expressed by the venom duct.

It localises to the secreted. This Conus tessulatus (Tessellate cone) protein is Conotoxin TsMMSK-021.